We begin with the raw amino-acid sequence, 155 residues long: Pathogenesis-related protein 2 (155 aa).

This sequence belongs to the BetVI family.

The sequence is that of Pathogenesis-related protein 2 from Phaseolus vulgaris (Kidney bean).